Consider the following 276-residue polypeptide: Large ribosomal subunit protein uL2 (276 aa).

2 disordered regions span residues 37 to 59 (QIQK…GGHK) and 225 to 276 (VMNP…RHKR). Residues 39-49 (QKSGRNNNGHI) are compositionally biased toward polar residues. Residues 50-59 (TTRHKGGGHK) show a composition bias toward basic residues.

This sequence belongs to the universal ribosomal protein uL2 family. In terms of assembly, part of the 50S ribosomal subunit. Forms a bridge to the 30S subunit in the 70S ribosome.

Its function is as follows. One of the primary rRNA binding proteins. Required for association of the 30S and 50S subunits to form the 70S ribosome, for tRNA binding and peptide bond formation. It has been suggested to have peptidyltransferase activity; this is somewhat controversial. Makes several contacts with the 16S rRNA in the 70S ribosome. The protein is Large ribosomal subunit protein uL2 of Ralstonia pickettii (strain 12J).